A 406-amino-acid chain; its full sequence is uncharacterized protein (406 aa).

The protein belongs to the glycosyltransferase group 1 family. Glycosyltransferase 4 subfamily.

This is an uncharacterized protein from Methanocaldococcus jannaschii (strain ATCC 43067 / DSM 2661 / JAL-1 / JCM 10045 / NBRC 100440) (Methanococcus jannaschii).